Consider the following 311-residue polypeptide: tRNA-cytidine(32) 2-sulfurtransferase (311 aa).

A PP-loop motif motif is present at residues 47-52 (SGGKDS). [4Fe-4S] cluster-binding residues include cysteine 122, cysteine 125, and cysteine 213.

Belongs to the TtcA family. As to quaternary structure, homodimer. The cofactor is Mg(2+). Requires [4Fe-4S] cluster as cofactor.

It localises to the cytoplasm. The catalysed reaction is cytidine(32) in tRNA + S-sulfanyl-L-cysteinyl-[cysteine desulfurase] + AH2 + ATP = 2-thiocytidine(32) in tRNA + L-cysteinyl-[cysteine desulfurase] + A + AMP + diphosphate + H(+). It functions in the pathway tRNA modification. In terms of biological role, catalyzes the ATP-dependent 2-thiolation of cytidine in position 32 of tRNA, to form 2-thiocytidine (s(2)C32). The sulfur atoms are provided by the cysteine/cysteine desulfurase (IscS) system. The chain is tRNA-cytidine(32) 2-sulfurtransferase from Shigella boydii serotype 4 (strain Sb227).